A 404-amino-acid chain; its full sequence is Cysteine desulfurase IscS (404 aa).

Pyridoxal 5'-phosphate contacts are provided by residues 75-76 (AT), asparagine 155, glutamine 183, and 203-205 (SAH). Residue lysine 206 is modified to N6-(pyridoxal phosphate)lysine. Threonine 243 serves as a coordination point for pyridoxal 5'-phosphate. Cysteine 328 serves as the catalytic Cysteine persulfide intermediate. Cysteine 328 provides a ligand contact to [2Fe-2S] cluster.

Belongs to the class-V pyridoxal-phosphate-dependent aminotransferase family. NifS/IscS subfamily. As to quaternary structure, homodimer. Forms a heterotetramer with IscU, interacts with other sulfur acceptors. Pyridoxal 5'-phosphate serves as cofactor.

It localises to the cytoplasm. The enzyme catalyses (sulfur carrier)-H + L-cysteine = (sulfur carrier)-SH + L-alanine. It participates in cofactor biosynthesis; iron-sulfur cluster biosynthesis. In terms of biological role, master enzyme that delivers sulfur to a number of partners involved in Fe-S cluster assembly, tRNA modification or cofactor biosynthesis. Catalyzes the removal of elemental sulfur atoms from cysteine to produce alanine. Functions as a sulfur delivery protein for Fe-S cluster synthesis onto IscU, an Fe-S scaffold assembly protein, as well as other S acceptor proteins. The polypeptide is Cysteine desulfurase IscS (Vesicomyosocius okutanii subsp. Calyptogena okutanii (strain HA)).